The chain runs to 273 residues: Ribosomal RNA small subunit methyltransferase A (273 aa).

6 residues coordinate S-adenosyl-L-methionine: Asn-25, Leu-27, Gly-52, Glu-73, Asp-99, and Asn-118.

Belongs to the class I-like SAM-binding methyltransferase superfamily. rRNA adenine N(6)-methyltransferase family. RsmA subfamily.

The protein localises to the cytoplasm. The enzyme catalyses adenosine(1518)/adenosine(1519) in 16S rRNA + 4 S-adenosyl-L-methionine = N(6)-dimethyladenosine(1518)/N(6)-dimethyladenosine(1519) in 16S rRNA + 4 S-adenosyl-L-homocysteine + 4 H(+). In terms of biological role, specifically dimethylates two adjacent adenosines (A1518 and A1519) in the loop of a conserved hairpin near the 3'-end of 16S rRNA in the 30S particle. May play a critical role in biogenesis of 30S subunits. The protein is Ribosomal RNA small subunit methyltransferase A of Novosphingobium aromaticivorans (strain ATCC 700278 / DSM 12444 / CCUG 56034 / CIP 105152 / NBRC 16084 / F199).